The primary structure comprises 188 residues: Elongation factor P (188 aa).

The protein belongs to the elongation factor P family.

It is found in the cytoplasm. It functions in the pathway protein biosynthesis; polypeptide chain elongation. Its function is as follows. Involved in peptide bond synthesis. Stimulates efficient translation and peptide-bond synthesis on native or reconstituted 70S ribosomes in vitro. Probably functions indirectly by altering the affinity of the ribosome for aminoacyl-tRNA, thus increasing their reactivity as acceptors for peptidyl transferase. In Rickettsia massiliae (strain Mtu5), this protein is Elongation factor P.